Consider the following 222-residue polypeptide: uncharacterized protein (222 aa).

Glycine 2 carries the N-myristoyl glycine; by host lipid modification.

It belongs to the mimivirus R683/R861 family.

This is an uncharacterized protein from Acanthamoeba polyphaga mimivirus (APMV).